The chain runs to 157 residues: Large ribosomal subunit protein eL24 (157 aa).

Residues 94-157 (RNQKPEVRKA…ISAPRVGGKR (64 aa)) are disordered. Basic and acidic residues predominate over residues 96-117 (QKPEVRKAQREQAIRAAKESKK). The segment covering 123-140 (KKPAAASAKTSAKTAQKP) has biased composition (low complexity).

It belongs to the eukaryotic ribosomal protein eL24 family. In terms of assembly, component of the large ribosomal subunit.

It localises to the cytoplasm. Component of the large ribosomal subunit. The ribosome is a large ribonucleoprotein complex responsible for the synthesis of proteins in the cell. The sequence is that of Large ribosomal subunit protein eL24 (rpl24) from Gillichthys mirabilis (Long-jawed mudsucker).